The sequence spans 53 residues: Small polypeptide DEVIL 16 (53 aa).

The N-linked (GlcNAc...) asparagine glycan is linked to Asn-6. A required for DVL/RTFL small polypeptide activity region spans residues 14–45 (TFGQKCSHVVKKQRAKFYILRRCIAMLVCWHD). The chain crosses the membrane as a helical span at residues 30–46 (FYILRRCIAMLVCWHDQ).

Belongs to the DVL/RTFL small polypeptides family. As to expression, mostly expressed in stems, flower buds, flowers and seedling shoots, to a lesser extent, in roots and young cauline leaves, but not in mature rosette leaves. Barely observed in cotyledons and leaf primordia.

Its subcellular location is the cell membrane. Functionally, small polypeptide acting as a regulatory molecule which coordinates cellular responses required for differentiation, growth and development, probably by restricting polar cell proliferation in lateral organs (e.g. leaves) and coordinating socket cell recruitment and differentiation at trichome sites. Regulates the positional cue and cell proliferation along the body axis. In Arabidopsis thaliana (Mouse-ear cress), this protein is Small polypeptide DEVIL 16.